The primary structure comprises 177 residues: Large ribosomal subunit protein uL6 (177 aa).

It belongs to the universal ribosomal protein uL6 family. In terms of assembly, part of the 50S ribosomal subunit.

In terms of biological role, this protein binds to the 23S rRNA, and is important in its secondary structure. It is located near the subunit interface in the base of the L7/L12 stalk, and near the tRNA binding site of the peptidyltransferase center. This Histophilus somni (strain 2336) (Haemophilus somnus) protein is Large ribosomal subunit protein uL6.